A 271-amino-acid chain; its full sequence is uncharacterized protein (271 aa).

This sequence belongs to the HAD-like hydrolase superfamily.

This is an uncharacterized protein from Staphylococcus aureus (strain Mu50 / ATCC 700699).